Here is a 322-residue protein sequence, read N- to C-terminus: Ribonuclease Z (322 aa).

Zn(2+) is bound by residues His62, His64, Asp66, His67, His143, Asp215, and His273. Residue Asp66 is the Proton acceptor of the active site. Over residues 300–314 (ELRRYELDPREKEPD) the composition is skewed to basic and acidic residues. A disordered region spans residues 300-322 (ELRRYELDPREKEPDPVGPADES).

The protein belongs to the RNase Z family. Homodimer. It depends on Zn(2+) as a cofactor.

It catalyses the reaction Endonucleolytic cleavage of RNA, removing extra 3' nucleotides from tRNA precursor, generating 3' termini of tRNAs. A 3'-hydroxy group is left at the tRNA terminus and a 5'-phosphoryl group is left at the trailer molecule.. Functionally, zinc phosphodiesterase, which displays some tRNA 3'-processing endonuclease activity. Probably involved in tRNA maturation, by removing a 3'-trailer from precursor tRNA. The chain is Ribonuclease Z from Salinibacter ruber (strain DSM 13855 / M31).